The chain runs to 432 residues: D-amino acid dehydrogenase (432 aa).

An FAD-binding site is contributed by 3–17 (VLVLGSGVIGTASAY).

This sequence belongs to the DadA oxidoreductase family. Requires FAD as cofactor.

It carries out the reaction a D-alpha-amino acid + A + H2O = a 2-oxocarboxylate + AH2 + NH4(+). It functions in the pathway amino-acid degradation; D-alanine degradation; NH(3) and pyruvate from D-alanine: step 1/1. Its function is as follows. Oxidative deamination of D-amino acids. The sequence is that of D-amino acid dehydrogenase from Ectopseudomonas mendocina (strain ymp) (Pseudomonas mendocina).